Consider the following 273-residue polypeptide: MDRYLVFGHPVRHSKSPFIHTLFARQTQQELEYGLAEPAVDEFATTLRAFFAQGGKGCNVTVPFKEQAFALVDSLSPRAKRAGAVNTIKLTDDGVLLGDNTDGAGLVADLKSHGVALAGSRILLLGAGGAARGALAPLLAEHPTELVIANRTHAKAQQLAAEFHDLGVVTALTYEQLGGTFDLIINSTSASLQGELPPLSPALIHADIAIYDMMYGSMDTPFISWAKQYGARQAMDGLGMLVEQAAEAFTVWRGIRPGTKQVLRELKRNLGTL.

Shikimate-binding positions include 14–16 (SKS) and threonine 61. Lysine 65 (proton acceptor) is an active-site residue. Positions 86 and 102 each coordinate shikimate. Residues 126 to 130 (GAGGA), 150 to 155 (NRTHAK), and methionine 213 each bind NADP(+). Tyrosine 215 serves as a coordination point for shikimate. Glycine 237 serves as a coordination point for NADP(+).

The protein belongs to the shikimate dehydrogenase family. In terms of assembly, homodimer.

The enzyme catalyses shikimate + NADP(+) = 3-dehydroshikimate + NADPH + H(+). It participates in metabolic intermediate biosynthesis; chorismate biosynthesis; chorismate from D-erythrose 4-phosphate and phosphoenolpyruvate: step 4/7. Functionally, involved in the biosynthesis of the chorismate, which leads to the biosynthesis of aromatic amino acids. Catalyzes the reversible NADPH linked reduction of 3-dehydroshikimate (DHSA) to yield shikimate (SA). In Aeromonas salmonicida (strain A449), this protein is Shikimate dehydrogenase (NADP(+)).